A 226-amino-acid chain; its full sequence is Glutathione S-transferase kappa 1 (226 aa).

Position 16 to 18 (16 to 18 (SPY)) interacts with glutathione. 2 positions are modified to N6-succinyllysine: K36 and K49. N53 lines the glutathione pocket. N6-acetyllysine; alternate occurs at positions 68 and 74. Residues K68 and K74 each carry the N6-succinyllysine; alternate modification. K85 carries the N6-acetyllysine modification. Residues K93 and K116 each carry the N6-acetyllysine; alternate modification. Residues K93 and K116 each carry the N6-succinyllysine; alternate modification. N6-succinyllysine is present on K144. Residue K158 is modified to N6-acetyllysine; alternate. K158 is subject to N6-succinyllysine; alternate. K165 bears the N6-acetyllysine mark. An N6-acetyllysine; alternate mark is found at K167 and K177. An N6-succinyllysine; alternate mark is found at K167 and K177. Residue L183 participates in glutathione binding. K193 is subject to N6-succinyllysine. 200 to 201 (SD) lines the glutathione pocket.

The protein belongs to the GST superfamily. Kappa family. As to quaternary structure, homodimer.

It localises to the mitochondrion matrix. It carries out the reaction RX + glutathione = an S-substituted glutathione + a halide anion + H(+). Functionally, glutathione S-transferase that catalyzes the conjugation of glutathione to exogenous and endogenous compounds. In Rattus norvegicus (Rat), this protein is Glutathione S-transferase kappa 1 (Gstk1).